Consider the following 118-residue polypeptide: Aspartate 1-decarboxylase (118 aa).

The active-site Schiff-base intermediate with substrate; via pyruvic acid is serine 25. Position 25 is a pyruvic acid (Ser) (serine 25). Threonine 57 is a binding site for substrate. Tyrosine 58 acts as the Proton donor in catalysis. Residue 73 to 75 participates in substrate binding; that stretch reads GAA.

It belongs to the PanD family. As to quaternary structure, heterooctamer of four alpha and four beta subunits. Pyruvate serves as cofactor. Is synthesized initially as an inactive proenzyme, which is activated by self-cleavage at a specific serine bond to produce a beta-subunit with a hydroxyl group at its C-terminus and an alpha-subunit with a pyruvoyl group at its N-terminus.

It localises to the cytoplasm. It catalyses the reaction L-aspartate + H(+) = beta-alanine + CO2. Its pathway is cofactor biosynthesis; (R)-pantothenate biosynthesis; beta-alanine from L-aspartate: step 1/1. Functionally, catalyzes the pyruvoyl-dependent decarboxylation of aspartate to produce beta-alanine. The chain is Aspartate 1-decarboxylase from Porphyromonas gingivalis (strain ATCC 33277 / DSM 20709 / CIP 103683 / JCM 12257 / NCTC 11834 / 2561).